The following is a 386-amino-acid chain: ORC1-type DNA replication protein 3 (386 aa).

Residues 65–69 and Y206 contribute to the ATP site; that span reads TGKTF.

Belongs to the CDC6/cdc18 family.

Its function is as follows. Involved in regulation of DNA replication. This Sulfurisphaera tokodaii (strain DSM 16993 / JCM 10545 / NBRC 100140 / 7) (Sulfolobus tokodaii) protein is ORC1-type DNA replication protein 3 (cdc6-3).